Here is a 73-residue protein sequence, read N- to C-terminus: uncharacterized protein (73 aa).

A signal peptide spans 1 to 30 (MVDFYFIEEKVAYRAAFTTTGKIAATLGLA).

This is an uncharacterized protein from Archaeoglobus fulgidus (strain ATCC 49558 / DSM 4304 / JCM 9628 / NBRC 100126 / VC-16).